We begin with the raw amino-acid sequence, 461 residues long: Photosystem II CP43 reaction center protein (461 aa).

Positions 1–2 (ME) are excised as a propeptide. T3 is modified (N-acetylthreonine). A Phosphothreonine modification is found at T3. Helical transmembrane passes span 57 to 81 (LFEVAHFIPEKPMYEQGLILLPHLA), 122 to 143 (IIGPEVLEESFPFFGYDWKDKN), 166 to 188 (KAMFFGGVYDTWAPGGGDVRVIS), 243 to 263 (KPFSWARRALVWSGEAYLSYS), and 279 to 300 (WFNNTAYPSEFFGPTGPEASQA). [CaMn4O5] cluster is bound at residue E355. The helical transmembrane segment at 435 to 459 (RARAASGGFEKGLDRENEPVLSMKL) threads the bilayer.

This sequence belongs to the PsbB/PsbC family. PsbC subfamily. In terms of assembly, PSII is composed of 1 copy each of membrane proteins PsbA, PsbB, PsbC, PsbD, PsbE, PsbF, PsbH, PsbI, PsbJ, PsbK, PsbL, PsbM, PsbT, PsbX, PsbY, PsbZ, Psb30/Ycf12, at least 3 peripheral proteins of the oxygen-evolving complex and a large number of cofactors. It forms dimeric complexes. Requires Binds multiple chlorophylls and provides some of the ligands for the Ca-4Mn-5O cluster of the oxygen-evolving complex. It may also provide a ligand for a Cl- that is required for oxygen evolution. PSII binds additional chlorophylls, carotenoids and specific lipids. as cofactor.

It localises to the plastid. It is found in the cyanelle thylakoid membrane. In terms of biological role, one of the components of the core complex of photosystem II (PSII). It binds chlorophyll and helps catalyze the primary light-induced photochemical processes of PSII. PSII is a light-driven water:plastoquinone oxidoreductase, using light energy to abstract electrons from H(2)O, generating O(2) and a proton gradient subsequently used for ATP formation. The polypeptide is Photosystem II CP43 reaction center protein (Cyanophora paradoxa).